Here is a 72-residue protein sequence, read N- to C-terminus: Protein SlyX (72 aa).

The tract at residues 53 to 72 is disordered; it reads KSSQSSMLARPEDETPPPHY.

The protein belongs to the SlyX family.

The protein is Protein SlyX of Proteus mirabilis (strain HI4320).